Consider the following 708-residue polypeptide: Wall-associated receptor kinase-like 14 (708 aa).

The N-terminal stretch at 1 to 42 is a signal peptide; the sequence is MLRSIFDFNQRSTKMVMISHKLDLILVFIIVIGGSIFRRVSA. Asn43, Asn88, Asn101, Asn131, Asn158, Asn167, and Asn184 each carry an N-linked (GlcNAc...) asparagine glycan. Residues 43–285 lie on the Extracellular side of the membrane; it reads NFTVPCNGRC…WRHCRSNLIT (243 aa). A helical transmembrane segment spans residues 286–306; that stretch reads IVGGTVGGAFLLAALAFFFFC. The Cytoplasmic segment spans residues 307-708; it reads KRRRSTPLRS…TNTLLGNIPR (402 aa). Residues 348 to 629 form the Protein kinase domain; the sequence is FSEKQKLGIG…LEQIRLSGWI (282 aa). Residues 354-362 and Lys376 each bind ATP; that span reads LGIGAYGTV. The Proton acceptor role is filled by Asp472. Disordered regions lie at residues 636–659 and 686–708; these read SPAG…SIGS and VQDP…NIPR. The span at 643-652 shows a compositional bias: basic and acidic residues; it reads SSDRGSERSV. Over residues 692–708 the composition is skewed to polar residues; the sequence is SAQSSPSTNTLLGNIPR.

Belongs to the protein kinase superfamily. Ser/Thr protein kinase family.

Its subcellular location is the membrane. It catalyses the reaction L-seryl-[protein] + ATP = O-phospho-L-seryl-[protein] + ADP + H(+). The enzyme catalyses L-threonyl-[protein] + ATP = O-phospho-L-threonyl-[protein] + ADP + H(+). Functionally, serine/threonine-protein kinase that may function as a signaling receptor of extracellular matrix component. The chain is Wall-associated receptor kinase-like 14 (WAKL14) from Arabidopsis thaliana (Mouse-ear cress).